Consider the following 206-residue polypeptide: N-(5'-phosphoribosyl)anthranilate isomerase (206 aa).

Belongs to the TrpF family.

The enzyme catalyses N-(5-phospho-beta-D-ribosyl)anthranilate = 1-(2-carboxyphenylamino)-1-deoxy-D-ribulose 5-phosphate. Its pathway is amino-acid biosynthesis; L-tryptophan biosynthesis; L-tryptophan from chorismate: step 3/5. This Chlamydia felis (strain Fe/C-56) (Chlamydophila felis) protein is N-(5'-phosphoribosyl)anthranilate isomerase.